The sequence spans 356 residues: UDP-N-acetylenolpyruvoylglucosamine reductase (356 aa).

An FAD-binding PCMH-type domain is found at 19-227 (LGGPAARFCS…RDAVLSLRRS (209 aa)). The active site involves Arg-167. The active-site Proton donor is the Ser-244. Residue Glu-348 is part of the active site.

This sequence belongs to the MurB family. Requires FAD as cofactor.

It is found in the cytoplasm. The catalysed reaction is UDP-N-acetyl-alpha-D-muramate + NADP(+) = UDP-N-acetyl-3-O-(1-carboxyvinyl)-alpha-D-glucosamine + NADPH + H(+). Its pathway is cell wall biogenesis; peptidoglycan biosynthesis. Cell wall formation. The sequence is that of UDP-N-acetylenolpyruvoylglucosamine reductase from Thermobifida fusca (strain YX).